Consider the following 607-residue polypeptide: Potassium transporter KimA (607 aa).

The Cytoplasmic segment spans residues 1-30 (MYHSIKRFLIGKPLKSQAAGEQKLTKLKAL). The chain crosses the membrane as a helical span at residues 31–49 (AMLSSDALSSVAYGTEQIL). Residues D36 and Y43 each contribute to the K(+) site. Residues 50-62 (IILATISAAAFWY) lie on the Extracellular side of the membrane. A helical transmembrane segment spans residues 63-84 (SIPIAVGVLILLLALILSYRQI). Residues 85–105 (IYAYPQGGGAYIVSKENLGEK) lie on the Cytoplasmic side of the membrane. Residues 106 to 134 (PGLIAGGSLLVDYILTVAVSISAGTDAIT) form a helical membrane-spanning segment. Positions 117 and 125 each coordinate K(+). Over 135–142 (SAFPALHD) the chain is Extracellular. A helical transmembrane segment spans residues 143 to 162 (YHVPIAIFLVLVIMILNLRG). The Cytoplasmic segment spans residues 163 to 166 (LSES). The chain crosses the membrane as a helical span at residues 167 to 190 (ASILAYPVYLFVVALLVLIAVGLF). Topologically, residues 191 to 214 (KLMTGQIDQPAHHTSLGTPVAGIT) are extracellular. A helical membrane pass occupies residues 215–238 (LFLLLKAFSSGCSALTGVEAISNA). The Cytoplasmic portion of the chain corresponds to 239–249 (IPAFKNPPARN). A helical transmembrane segment spans residues 250 to 271 (AARTLAMMGILLAILFSGITVL). Topologically, residues 272–298 (AYGYGTAPKPDETVVSQIASETFGRNV) are extracellular. The chain crosses the membrane as a helical span at residues 299-323 (FYYVIQGVTSLILVLAANTGFSAFP). Residues 324-347 (QLAFNLARDQYMPRMFTVRGDRLG) are Cytoplasmic-facing. Residues 348–366 (FSNGIIFLGFASIVLIILF) traverse the membrane as a helical segment. Residues 367–372 (GGQTEH) are Extracellular-facing. Residues 373-393 (LIPLYAVGVFIPFTLSQTGMC) traverse the membrane as a helical segment. The Cytoplasmic segment spans residues 394-405 (MKWIKQKPKGWI). Residues 406 to 428 (GKMLINSCGALISFMVLSILFVT) form a helical membrane-spanning segment. Residues 429–431 (KFN) lie on the Extracellular side of the membrane. The helical transmembrane segment at 432 to 447 (VVWPVLIFMPIVVLLF) threads the bilayer. Over 448-607 (FAIKNHYTAV…VATLPYHFKK (160 aa)) the chain is Cytoplasmic.

It belongs to the amino acid-polyamine-organocation (APC) superfamily. As to quaternary structure, homodimer.

Its subcellular location is the cell membrane. The enzyme catalyses K(+)(in) + H(+)(in) = K(+)(out) + H(+)(out). Its activity is regulated as follows. Potassium uptake increases at lower external pH and is abolished by the proton ionophore carbonyl cyanide m-chlorophenylhydrazone (CCCP). Binds cyclic di-AMP (c-di-AMP), which inhibits the potassium transport activity. In terms of biological role, high-affinity potassium transporter. Functions as a K(+)/H(+) symporter. The polypeptide is Potassium transporter KimA (Bacillus subtilis (strain 168)).